A 350-amino-acid polypeptide reads, in one-letter code: GTPase Obg (350 aa).

Residues 1–175 (MFVDNIRIFA…GVFFMELRRI (175 aa)) form the Obg domain. In terms of domain architecture, OBG-type G spans 176–345 (ADAGLVGYPN…LRNRLDELVG (170 aa)). GTP contacts are provided by residues 182 to 189 (GYPNAGKS), 207 to 211 (FTTLQ), 229 to 232 (DIPG), 299 to 302 (NKMD), and 326 to 328 (SAL). Mg(2+) contacts are provided by S189 and T209.

This sequence belongs to the TRAFAC class OBG-HflX-like GTPase superfamily. OBG GTPase family. As to quaternary structure, monomer. Mg(2+) is required as a cofactor.

It is found in the cytoplasm. Its function is as follows. An essential GTPase which binds GTP, GDP and possibly (p)ppGpp with moderate affinity, with high nucleotide exchange rates and a fairly low GTP hydrolysis rate. Plays a role in control of the cell cycle, stress response, ribosome biogenesis and in those bacteria that undergo differentiation, in morphogenesis control. The chain is GTPase Obg from Akkermansia muciniphila (strain ATCC BAA-835 / DSM 22959 / JCM 33894 / BCRC 81048 / CCUG 64013 / CIP 107961 / Muc).